A 396-amino-acid chain; its full sequence is Large ribosomal subunit protein uL4A (396 aa).

The segment covering 352-373 (KAKEKKPDDGKPKAKKPLDAKT) has biased composition (basic and acidic residues). The disordered stretch occupies residues 352-374 (KAKEKKPDDGKPKAKKPLDAKTK).

It belongs to the universal ribosomal protein uL4 family. Component of the large ribosomal subunit.

It is found in the cytoplasm. Component of the large ribosomal subunit. The ribosome is a large ribonucleoprotein complex responsible for the synthesis of proteins in the cell. This Xenopus laevis (African clawed frog) protein is Large ribosomal subunit protein uL4A (rpl4-a).